Consider the following 380-residue polypeptide: Cytochrome b (380 aa).

4 helical membrane-spanning segments follow: residues Phe34–Ala54, Trp78–Ile99, Trp114–Leu134, and Phe179–Thr199. Heme b is bound by residues His84 and His98. Positions 183 and 197 each coordinate heme b. His202 is an a ubiquinone binding site. Helical transmembrane passes span Leu227–Ser247, Leu289–His309, Phe321–Ser341, and Phe348–Pro368.

This sequence belongs to the cytochrome b family. In terms of assembly, the cytochrome bc1 complex contains 11 subunits: 3 respiratory subunits (MT-CYB, CYC1 and UQCRFS1), 2 core proteins (UQCRC1 and UQCRC2) and 6 low-molecular weight proteins (UQCRH/QCR6, UQCRB/QCR7, UQCRQ/QCR8, UQCR10/QCR9, UQCR11/QCR10 and a cleavage product of UQCRFS1). This cytochrome bc1 complex then forms a dimer. It depends on heme b as a cofactor.

It localises to the mitochondrion inner membrane. Functionally, component of the ubiquinol-cytochrome c reductase complex (complex III or cytochrome b-c1 complex) that is part of the mitochondrial respiratory chain. The b-c1 complex mediates electron transfer from ubiquinol to cytochrome c. Contributes to the generation of a proton gradient across the mitochondrial membrane that is then used for ATP synthesis. In Antigone antigone (Sarus crane), this protein is Cytochrome b (MT-CYB).